The chain runs to 296 residues: Elongation factor Ts (296 aa).

Residues 79 to 82 (TDFV) are involved in Mg(2+) ion dislocation from EF-Tu.

The protein belongs to the EF-Ts family.

The protein resides in the cytoplasm. Associates with the EF-Tu.GDP complex and induces the exchange of GDP to GTP. It remains bound to the aminoacyl-tRNA.EF-Tu.GTP complex up to the GTP hydrolysis stage on the ribosome. This is Elongation factor Ts from Acholeplasma laidlawii (strain PG-8A).